We begin with the raw amino-acid sequence, 266 residues long: Undecaprenyl-diphosphatase 1 (266 aa).

Transmembrane regions (helical) follow at residues 1–21 (MDTFQVIILALIQGLTEFLPI), 39–59 (QGLSFDVAVNTGSLFAVVIYF), 87–107 (WWIILATLPAVFFGFMAKDFI), 114–134 (TGVIAVTTVVFGLLLWWADKM), 149–169 (ALLIGFAQALALIPGTSRSGA), 183–203 (AAARFSFLMSVPVSLGAAILV), 218–238 (ALTLGTVISFAAAYLCIHYFL), and 246–266 (MTPFVIYRLALGAVLCGFIFL).

This sequence belongs to the UppP family.

It localises to the cell inner membrane. It carries out the reaction di-trans,octa-cis-undecaprenyl diphosphate + H2O = di-trans,octa-cis-undecaprenyl phosphate + phosphate + H(+). Its function is as follows. Catalyzes the dephosphorylation of undecaprenyl diphosphate (UPP). Confers resistance to bacitracin. This is Undecaprenyl-diphosphatase 1 from Shewanella oneidensis (strain ATCC 700550 / JCM 31522 / CIP 106686 / LMG 19005 / NCIMB 14063 / MR-1).